The primary structure comprises 278 residues: Elongation factor Ts (278 aa).

The tract at residues Thr-79–Val-82 is involved in Mg(2+) ion dislocation from EF-Tu.

Belongs to the EF-Ts family.

It localises to the cytoplasm. In terms of biological role, associates with the EF-Tu.GDP complex and induces the exchange of GDP to GTP. It remains bound to the aminoacyl-tRNA.EF-Tu.GTP complex up to the GTP hydrolysis stage on the ribosome. The protein is Elongation factor Ts of Borrelia duttonii (strain Ly).